The following is a 508-amino-acid chain: Methionine--tRNA ligase (508 aa).

Positions 12-22 (YYVNDIPHIGH) match the 'HIGH' region motif. A 'KMSKS' region motif is present at residues 295 to 299 (KISKS). ATP is bound at residue K298.

This sequence belongs to the class-I aminoacyl-tRNA synthetase family. MetG type 2B subfamily. In terms of assembly, monomer.

Its subcellular location is the cytoplasm. The catalysed reaction is tRNA(Met) + L-methionine + ATP = L-methionyl-tRNA(Met) + AMP + diphosphate. Functionally, is required not only for elongation of protein synthesis but also for the initiation of all mRNA translation through initiator tRNA(fMet) aminoacylation. The polypeptide is Methionine--tRNA ligase (Rickettsia conorii (strain ATCC VR-613 / Malish 7)).